Here is a 310-residue protein sequence, read N- to C-terminus: Thioredoxin reductase (310 aa).

34 to 41 contributes to the FAD binding site; sequence NGMQPGGQ. Cysteine 135 and cysteine 138 are oxidised to a cystine. FAD is bound at residue 281-290; the sequence is DVQDKIYRQA.

It belongs to the class-II pyridine nucleotide-disulfide oxidoreductase family. In terms of assembly, homodimer. FAD is required as a cofactor.

Its subcellular location is the cytoplasm. The catalysed reaction is [thioredoxin]-dithiol + NADP(+) = [thioredoxin]-disulfide + NADPH + H(+). This Rickettsia felis (strain ATCC VR-1525 / URRWXCal2) (Rickettsia azadi) protein is Thioredoxin reductase (trxB).